We begin with the raw amino-acid sequence, 64 residues long: uncharacterized protein (64 aa).

The tract at residues 1–64 is disordered; sequence MNNPNIVPPH…QNQPPQRPQY (64 aa). The span at 8–32 shows a compositional bias: low complexity; that stretch reads PPHFNQHQQQNHNQNQPPHHMNNPN.

This is an uncharacterized protein from Dictyostelium discoideum (Social amoeba).